Here is a 134-residue protein sequence, read N- to C-terminus: Small ribosomal subunit protein uS8 (134 aa).

Belongs to the universal ribosomal protein uS8 family. As to quaternary structure, part of the 30S ribosomal subunit. Contacts proteins S5 and S12.

One of the primary rRNA binding proteins, it binds directly to 16S rRNA central domain where it helps coordinate assembly of the platform of the 30S subunit. The chain is Small ribosomal subunit protein uS8 from Pseudothermotoga lettingae (strain ATCC BAA-301 / DSM 14385 / NBRC 107922 / TMO) (Thermotoga lettingae).